A 256-amino-acid polypeptide reads, in one-letter code: Hydroxyethylthiazole kinase (256 aa).

Met-38 is a substrate binding site. 2 residues coordinate ATP: Thr-114 and Thr-159. Residue Gly-186 coordinates substrate.

Belongs to the Thz kinase family. Mg(2+) serves as cofactor.

It carries out the reaction 5-(2-hydroxyethyl)-4-methylthiazole + ATP = 4-methyl-5-(2-phosphooxyethyl)-thiazole + ADP + H(+). It participates in cofactor biosynthesis; thiamine diphosphate biosynthesis; 4-methyl-5-(2-phosphoethyl)-thiazole from 5-(2-hydroxyethyl)-4-methylthiazole: step 1/1. In terms of biological role, catalyzes the phosphorylation of the hydroxyl group of 4-methyl-5-beta-hydroxyethylthiazole (THZ). In Streptococcus agalactiae serotype V (strain ATCC BAA-611 / 2603 V/R), this protein is Hydroxyethylthiazole kinase.